A 134-amino-acid polypeptide reads, in one-letter code: Large ribosomal subunit protein eL32 (134 aa).

The protein belongs to the eukaryotic ribosomal protein eL32 family.

The chain is Large ribosomal subunit protein eL32 (RpL32) from Drosophila bifasciata (Fruit fly).